An 82-amino-acid polypeptide reads, in one-letter code: Small ribosomal subunit protein bS16 (82 aa).

This sequence belongs to the bacterial ribosomal protein bS16 family.

The protein is Small ribosomal subunit protein bS16 of Saccharophagus degradans (strain 2-40 / ATCC 43961 / DSM 17024).